Here is a 250-residue protein sequence, read N- to C-terminus: Anti-sigma-L factor RslA (250 aa).

The Cytoplasmic portion of the chain corresponds to 1 to 115 (MTMPLRGLGP…VHRRRRRTRL (115 aa)). A helical membrane pass occupies residues 116–136 (ITWVASSAAAAVLAIGVLVGV). The Extracellular portion of the chain corresponds to 137 to 250 (QGHSAAPQRA…TGQVLLQRSL (114 aa)).

In terms of assembly, interacts with ECF RNA polymerase sigma factor SigL; this should inhibit the interaction of SigL with the RNA polymerase catalytic core. Probably cleaved within the membrane by Rip1 near the cytoplasmic membrane interface.

It localises to the cell membrane. Its function is as follows. An anti-sigma factor for extracytoplasmic function (ECF) sigma factor SigL. ECF sigma factors are held in an inactive form by an anti-sigma factor until released by regulated intramembrane proteolysis (RIP). RIP occurs when an extracytoplasmic signal triggers a concerted proteolytic cascade to transmit information and elicit cellular responses. The membrane-spanning regulatory substrate protein is first cut extracytoplasmically (site-1 protease, S1P), then within the membrane itself (site-2 protease, S2P, Rip1), while cytoplasmic proteases finish degrading the regulatory protein, liberating the sigma factor. The sequence is that of Anti-sigma-L factor RslA (rslA) from Mycobacterium tuberculosis (strain ATCC 35801 / TMC 107 / Erdman).